The sequence spans 441 residues: Phosphoribosylamine--glycine ligase (441 aa).

In terms of domain architecture, ATP-grasp spans 112-319; that stretch reads RNFMKKYGIE…FTEIMSAVVK (208 aa). An ATP-binding site is contributed by 139–196; sequence IEKLGDVAVKPSGLTGGKGVKVMGDQLPDLKAAKDYTSELLEKGPVVIEERFIGEEFT. Mg(2+)-binding residues include Gln-277, Glu-289, and Asn-291. Mn(2+) is bound by residues Gln-277, Glu-289, and Asn-291.

It belongs to the GARS family. The cofactor is Mg(2+). Mn(2+) serves as cofactor.

The catalysed reaction is 5-phospho-beta-D-ribosylamine + glycine + ATP = N(1)-(5-phospho-beta-D-ribosyl)glycinamide + ADP + phosphate + H(+). The protein operates within purine metabolism; IMP biosynthesis via de novo pathway; N(1)-(5-phospho-D-ribosyl)glycinamide from 5-phospho-alpha-D-ribose 1-diphosphate: step 2/2. The polypeptide is Phosphoribosylamine--glycine ligase (Methanosarcina acetivorans (strain ATCC 35395 / DSM 2834 / JCM 12185 / C2A)).